The following is a 147-amino-acid chain: 3-dehydroquinate dehydratase 2 (147 aa).

The active-site Proton acceptor is the tyrosine 23. Residues asparagine 74, histidine 80, and aspartate 87 each contribute to the substrate site. Histidine 100 serves as the catalytic Proton donor. Substrate is bound by residues isoleucine 101–serine 102 and arginine 111.

The protein belongs to the type-II 3-dehydroquinase family. In terms of assembly, homododecamer.

The catalysed reaction is 3-dehydroquinate = 3-dehydroshikimate + H2O. It functions in the pathway metabolic intermediate biosynthesis; chorismate biosynthesis; chorismate from D-erythrose 4-phosphate and phosphoenolpyruvate: step 3/7. Its function is as follows. Catalyzes a trans-dehydration via an enolate intermediate. The polypeptide is 3-dehydroquinate dehydratase 2 (aroQ2) (Agrobacterium fabrum (strain C58 / ATCC 33970) (Agrobacterium tumefaciens (strain C58))).